Here is a 557-residue protein sequence, read N- to C-terminus: Alpha-barbatene synthase (557 aa).

(2E,6E)-farnesyl diphosphate-binding residues include R273, D310, D314, R451, and D454. Mg(2+) is bound by residues D310 and D314. Positions 310–314 (DDACD) match the DDXXD motif motif. Residues D454, D455, and D462 each contribute to the Mg(2+) site.

Belongs to the terpene synthase family. Tpsa subfamily. In terms of assembly, monomer. Mg(2+) serves as cofactor. Requires Mn(2+) as cofactor. Expressed exclusively in flowers. Expressed in intrafloral nectaries and in the funiculus within the ovules.

Its subcellular location is the cytoplasm. It catalyses the reaction (2E,6E)-farnesyl diphosphate = (+)-alpha-barbatene + diphosphate. The catalysed reaction is (2E,6E)-farnesyl diphosphate = (+)-thujopsene + diphosphate. It carries out the reaction (2E,6E)-farnesyl diphosphate = (+)-beta-chamigrene + diphosphate. The enzyme catalyses (2E,6E)-farnesyl diphosphate = (+)-beta-barbatene + diphosphate. It catalyses the reaction (2E,6E)-farnesyl diphosphate = beta-sesquiphellandrene + diphosphate. The catalysed reaction is (2E,6E)-farnesyl diphosphate = (S)-beta-bisabolene + diphosphate. It carries out the reaction (2E,6E)-farnesyl diphosphate = (-)-alpha-cuprenene + diphosphate. The enzyme catalyses (2E,6E)-farnesyl diphosphate = alpha-zingiberene + diphosphate. It catalyses the reaction (2E,6E)-farnesyl diphosphate = beta-acoradiene + diphosphate. The catalysed reaction is (2E,6E)-farnesyl diphosphate = (E)-beta-farnesene + diphosphate. It participates in secondary metabolite biosynthesis; terpenoid biosynthesis. Its function is as follows. Involved in the biosynthesis of over 15 sesquiterpenes (C15). The major products are (+)-alpha-barbatene (27.3%), (+)-thujopsene (17.8%) and (+)-beta-chamigrene (9.9%). Can use farnesyl diphosphate or geranyl diphosphate as substrates, but not geranylgeranyl diphosphate. This chain is Alpha-barbatene synthase, found in Arabidopsis thaliana (Mouse-ear cress).